The following is a 995-amino-acid chain: Bifunctional glutamine synthetase adenylyltransferase/adenylyl-removing enzyme (995 aa).

Residues Met1–Leu487 form an adenylyl removase region. Residues Ala492 to Ser995 are adenylyl transferase.

It belongs to the GlnE family. Mg(2+) is required as a cofactor.

It catalyses the reaction [glutamine synthetase]-O(4)-(5'-adenylyl)-L-tyrosine + phosphate = [glutamine synthetase]-L-tyrosine + ADP. It carries out the reaction [glutamine synthetase]-L-tyrosine + ATP = [glutamine synthetase]-O(4)-(5'-adenylyl)-L-tyrosine + diphosphate. In terms of biological role, involved in the regulation of glutamine synthetase GlnA, a key enzyme in the process to assimilate ammonia. When cellular nitrogen levels are high, the C-terminal adenylyl transferase (AT) inactivates GlnA by covalent transfer of an adenylyl group from ATP to specific tyrosine residue of GlnA, thus reducing its activity. Conversely, when nitrogen levels are low, the N-terminal adenylyl removase (AR) activates GlnA by removing the adenylyl group by phosphorolysis, increasing its activity. The regulatory region of GlnE binds the signal transduction protein PII (GlnB) which indicates the nitrogen status of the cell. This chain is Bifunctional glutamine synthetase adenylyltransferase/adenylyl-removing enzyme, found in Mycobacterium marinum (strain ATCC BAA-535 / M).